We begin with the raw amino-acid sequence, 424 residues long: Adenylosuccinate synthetase 1 (424 aa).

Residues 12-18 and 40-42 each bind GTP; these read GDEGKGK and GHT. Catalysis depends on D13, which acts as the Proton acceptor. Mg(2+)-binding residues include D13 and G40. IMP-binding positions include 13–16, 38–41, T127, R141, T236, and R304; these read DEGK and NAGH. H41 (proton donor) is an active-site residue. Substrate is bound at residue 300–306; sequence ARTGRPR. GTP is bound by residues R306, 332 to 334, and 413 to 415; these read KLD and GVG.

The protein belongs to the adenylosuccinate synthetase family. As to quaternary structure, homodimer. Requires Mg(2+) as cofactor.

Its subcellular location is the cytoplasm. It catalyses the reaction IMP + L-aspartate + GTP = N(6)-(1,2-dicarboxyethyl)-AMP + GDP + phosphate + 2 H(+). Its pathway is purine metabolism; AMP biosynthesis via de novo pathway; AMP from IMP: step 1/2. Functionally, plays an important role in the de novo pathway of purine nucleotide biosynthesis. Catalyzes the first committed step in the biosynthesis of AMP from IMP. The polypeptide is Adenylosuccinate synthetase 1 (Methanosarcina acetivorans (strain ATCC 35395 / DSM 2834 / JCM 12185 / C2A)).